Consider the following 255-residue polypeptide: tRNA (guanine-N(7)-)-methyltransferase (255 aa).

The segment at 1 to 31 is disordered; that stretch reads MMHDDPNEAGLPPHNDAIPDETAEGADEVNP. Acidic residues predominate over residues 18-27; sequence IPDETAEGAD. S-adenosyl-L-methionine-binding residues include glutamate 86, glutamate 111, aspartate 138, and aspartate 161. Aspartate 161 is a catalytic residue. Substrate is bound by residues lysine 165, aspartate 197, and 232–235; that span reads TKFE.

This sequence belongs to the class I-like SAM-binding methyltransferase superfamily. TrmB family.

The catalysed reaction is guanosine(46) in tRNA + S-adenosyl-L-methionine = N(7)-methylguanosine(46) in tRNA + S-adenosyl-L-homocysteine. It functions in the pathway tRNA modification; N(7)-methylguanine-tRNA biosynthesis. Its function is as follows. Catalyzes the formation of N(7)-methylguanine at position 46 (m7G46) in tRNA. The sequence is that of tRNA (guanine-N(7)-)-methyltransferase from Burkholderia cenocepacia (strain HI2424).